A 156-amino-acid chain; its full sequence is CRIB domain-containing protein RIC11 (156 aa).

The CRIB domain maps to 26–39; it reads IGHPTEVKHVAHIG. The interval 87–156 is disordered; sequence QDQLNISDRI…SMVSRLNSNA (70 aa). A compositionally biased stretch (basic residues) spans 109–120; sequence IHTKSKNRRKKP. Over residues 121–142 the composition is skewed to low complexity; sequence SSTSSPRSRPSPKSSRSMGLSK.

In terms of biological role, functions as a downstream effector of Rho-related GTP binding proteins of the 'Rho of Plants' (ROPs) family. Participates in the propagation of ROP GTPase signals in specific cellular responses. This chain is CRIB domain-containing protein RIC11 (RIC11), found in Arabidopsis thaliana (Mouse-ear cress).